The sequence spans 87 residues: MKKTFSFTVLILFVIPLLVTGLMDSMPQRHPVEGWCKRPLPNQKPGPCNNDRCSARCKEQKQFEFKGGKAMGICSSENRCLCTFRCR.

The N-terminal stretch at 1-21 (MKKTFSFTVLILFVIPLLVTG) is a signal peptide. 4 disulfide bridges follow: cysteine 36–cysteine 86, cysteine 48–cysteine 74, cysteine 53–cysteine 80, and cysteine 57–cysteine 82.

Belongs to the DEFL family.

Its subcellular location is the secreted. The chain is Putative defensin-like protein 169 from Arabidopsis thaliana (Mouse-ear cress).